Consider the following 184-residue polypeptide: Photosystem I assembly protein Ycf4 (184 aa).

Transmembrane regions (helical) follow at residues 22–42 and 57–77; these read FFWA…GTSS and IIFF…LFIS.

Belongs to the Ycf4 family.

The protein localises to the plastid. The protein resides in the chloroplast thylakoid membrane. Seems to be required for the assembly of the photosystem I complex. The protein is Photosystem I assembly protein Ycf4 of Aethionema grandiflorum (Persian stone-cress).